A 282-amino-acid polypeptide reads, in one-letter code: Acetylglutamate kinase (282 aa).

Residues 62 to 63 (GG), Arg-84, and Asn-178 contribute to the substrate site.

It belongs to the acetylglutamate kinase family. ArgB subfamily.

Its subcellular location is the cytoplasm. It catalyses the reaction N-acetyl-L-glutamate + ATP = N-acetyl-L-glutamyl 5-phosphate + ADP. The protein operates within amino-acid biosynthesis; L-arginine biosynthesis; N(2)-acetyl-L-ornithine from L-glutamate: step 2/4. Catalyzes the ATP-dependent phosphorylation of N-acetyl-L-glutamate. This chain is Acetylglutamate kinase, found in Kosmotoga olearia (strain ATCC BAA-1733 / DSM 21960 / TBF 19.5.1).